Reading from the N-terminus, the 203-residue chain is MKILIATGNRDKLQEIAQIFSDHEVMGYHEIMEPFEIIEDGESFQANAIIKAKAIHERLSAQDRARYLILSDDSGISVPLLHGEPGIYSARYAGEPLSSKRNLQKLIEEIQKRGAERTPAHYTAAMAMILEGRIYTVHGWMHGEAIIAPRGERGFGYDPMFIPQGENRTLGEMEESEKNAISHRAKALKLARKLLQSLTKTEG.

7–12 (TGNRDK) contributes to the substrate binding site. Aspartate 73 functions as the Proton acceptor in the catalytic mechanism. Mg(2+) is bound at residue aspartate 73. Residues serine 74, 155 to 158 (FGYD), lysine 178, and 183 to 184 (HR) contribute to the substrate site.

The protein belongs to the HAM1 NTPase family. As to quaternary structure, homodimer. Requires Mg(2+) as cofactor.

The enzyme catalyses XTP + H2O = XMP + diphosphate + H(+). The catalysed reaction is dITP + H2O = dIMP + diphosphate + H(+). It carries out the reaction ITP + H2O = IMP + diphosphate + H(+). Pyrophosphatase that catalyzes the hydrolysis of nucleoside triphosphates to their monophosphate derivatives, with a high preference for the non-canonical purine nucleotides XTP (xanthosine triphosphate), dITP (deoxyinosine triphosphate) and ITP. Seems to function as a house-cleaning enzyme that removes non-canonical purine nucleotides from the nucleotide pool, thus preventing their incorporation into DNA/RNA and avoiding chromosomal lesions. In Wolinella succinogenes (strain ATCC 29543 / DSM 1740 / CCUG 13145 / JCM 31913 / LMG 7466 / NCTC 11488 / FDC 602W) (Vibrio succinogenes), this protein is dITP/XTP pyrophosphatase.